A 463-amino-acid polypeptide reads, in one-letter code: NADH dehydrogenase [ubiquinone] iron-sulfur protein 2, mitochondrial (463 aa).

The transit peptide at 1–33 (MAALRALRCLRGVGAPVLRPGSGIRLPSQPSRG) directs the protein to the mitochondrion. Position 62 is an N6-acetyllysine (lysine 62). Arginine 118 is modified (symmetric dimethylarginine). Positions 326, 332, and 347 each coordinate [4Fe-4S] cluster.

The protein belongs to the complex I 49 kDa subunit family. In terms of assembly, core subunit of respiratory chain NADH dehydrogenase (Complex I) which is composed of 45 different subunits. Component of the iron-sulfur (IP) fragment of the enzyme. Interacts with NDUFAF3. Interacts with NDUFAF7. Interacts with CERS2. [4Fe-4S] cluster is required as a cofactor. In terms of processing, dimethylation at Arg-118 by NDUFAF7 takes place after NDUFS2 assembles into the complex I, leading to stabilize the early intermediate complex.

The protein resides in the mitochondrion inner membrane. It catalyses the reaction a ubiquinone + NADH + 5 H(+)(in) = a ubiquinol + NAD(+) + 4 H(+)(out). Core subunit of the mitochondrial membrane respiratory chain NADH dehydrogenase (Complex I) which catalyzes electron transfer from NADH through the respiratory chain, using ubiquinone as an electron acceptor. Essential for the catalytic activity and assembly of complex I. Redox-sensitive, critical component of the oxygen-sensing pathway in the pulmonary vasculature which plays a key role in acute pulmonary oxygen-sensing and hypoxic pulmonary vasoconstriction. Plays an important role in carotid body sensing of hypoxia. Essential for glia-like neural stem and progenitor cell proliferation, differentiation and subsequent oligodendrocyte or neuronal maturation. This is NADH dehydrogenase [ubiquinone] iron-sulfur protein 2, mitochondrial (Ndufs2) from Mus musculus (Mouse).